A 112-amino-acid chain; its full sequence is Putative pterin-4-alpha-carbinolamine dehydratase (112 aa).

Belongs to the pterin-4-alpha-carbinolamine dehydratase family.

The enzyme catalyses (4aS,6R)-4a-hydroxy-L-erythro-5,6,7,8-tetrahydrobiopterin = (6R)-L-erythro-6,7-dihydrobiopterin + H2O. The protein is Putative pterin-4-alpha-carbinolamine dehydratase of Shewanella baltica (strain OS223).